Reading from the N-terminus, the 170-residue chain is dCTP pyrophosphatase 1 (170 aa).

Residues M1–F25 form a disordered region. Position 2 is an N-acetylserine (S2). Position 2 is a phosphoserine (S2). Residues H38 and W47–H51 each bind substrate. Residues E63 and E66 each contribute to the Mg(2+) site. Position 73 (W73) interacts with substrate. Residues E95 and D98 each contribute to the Mg(2+) site. A substrate-binding site is contributed by Y102. The segment at S150 to T170 is disordered.

In terms of assembly, homotetramer. It depends on Mg(2+) as a cofactor. As to expression, ubiquitous. Highly expressed in heart, liver, skeletal muscle, cerebellum, brain, and salivary gland.

It is found in the cytoplasm. It localises to the cytosol. The catalysed reaction is dCTP + H2O = dCMP + diphosphate + H(+). Its activity is regulated as follows. Inhibited by divalent calcium or cadmium ions. Functionally, hydrolyzes deoxynucleoside triphosphates (dNTPs) to the corresponding nucleoside monophosphates. Has a strong preference for dCTP and its analogs including 5-iodo-dCTP and 5-methyl-dCTP for which it may even have a higher efficiency. May protect DNA or RNA against the incorporation of these genotoxic nucleotide analogs through their catabolism. The polypeptide is dCTP pyrophosphatase 1 (Mus musculus (Mouse)).